The chain runs to 135 residues: Small ribosomal subunit protein uS11 (135 aa).

Low complexity predominate over residues 1–11; that stretch reads MPPKARAGAAV. Residues 1–22 are disordered; it reads MPPKARAGAAVKKVRRKERKNV.

The protein belongs to the universal ribosomal protein uS11 family. In terms of assembly, part of the 30S ribosomal subunit. Interacts with proteins S7 and S18. Binds to IF-3.

Its function is as follows. Located on the platform of the 30S subunit, it bridges several disparate RNA helices of the 16S rRNA. Forms part of the Shine-Dalgarno cleft in the 70S ribosome. This chain is Small ribosomal subunit protein uS11, found in Salinispora tropica (strain ATCC BAA-916 / DSM 44818 / JCM 13857 / NBRC 105044 / CNB-440).